The chain runs to 86 residues: UPF0457 protein SAUSA300_2132 (86 aa).

The protein belongs to the UPF0457 family.

The chain is UPF0457 protein SAUSA300_2132 from Staphylococcus aureus (strain USA300).